A 286-amino-acid polypeptide reads, in one-letter code: Transmembrane protein 156 (286 aa).

The Cytoplasmic segment spans residues 1-4 (MTET). The helical transmembrane segment at 5–25 (AFLKLFVAIVITFILVLPEFF) threads the bilayer. The Extracellular segment spans residues 26–214 (KTPKERTLEL…KSVTCSMKIT (189 aa)). Asparagine 45, asparagine 54, asparagine 76, and asparagine 142 each carry an N-linked (GlcNAc...) asparagine glycan. A helical transmembrane segment spans residues 215 to 235 (WYVLVLFVFMLGIIFIIYKIL). Residues 236 to 286 (EEHRRVWRRQSHNYKSSSVLFRGHDSGKLSTLNVRVIPGYPWTIWTRDFDE) are Cytoplasmic-facing.

The protein localises to the membrane. The polypeptide is Transmembrane protein 156 (Tmem156) (Rattus norvegicus (Rat)).